Consider the following 129-residue polypeptide: Protein NrdI (129 aa).

It belongs to the NrdI family.

Functionally, probably involved in ribonucleotide reductase function. This chain is Protein NrdI, found in Macrococcus caseolyticus (strain JCSC5402) (Macrococcoides caseolyticum).